A 160-amino-acid chain; its full sequence is Transcriptional repressor NrdR (160 aa).

The segment at 3–34 is a zinc-finger region; sequence CPFCGAEDTSVVDSRVSEEGSRIRRRRQCTAC. An ATP-cone domain is found at 49–139; sequence PQIIKQGGNR…VYRSFEDVGD (91 aa).

The protein belongs to the NrdR family. Zn(2+) serves as cofactor.

Functionally, negatively regulates transcription of bacterial ribonucleotide reductase nrd genes and operons by binding to NrdR-boxes. In Nitrosomonas eutropha (strain DSM 101675 / C91 / Nm57), this protein is Transcriptional repressor NrdR.